Reading from the N-terminus, the 443-residue chain is Probable D-serine dehydratase (443 aa).

Lys118 carries the N6-(pyridoxal phosphate)lysine modification.

Belongs to the serine/threonine dehydratase family. DsdA subfamily. The cofactor is pyridoxal 5'-phosphate.

It carries out the reaction D-serine = pyruvate + NH4(+). This is Probable D-serine dehydratase from Aeromonas salmonicida (strain A449).